A 199-amino-acid chain; its full sequence is Golgi to ER traffic protein 1 (199 aa).

Residues 1–11 (MLLPDLHPYTI) are Lumenal-facing. A helical transmembrane segment spans residues 12–31 (LLSIFLVLVAKQLVATIGKS). At 32 to 115 (TIQEFVWLVY…SIDKASNALI (84 aa)) the chain is on the cytoplasmic side. Residues 76-116 (YAKWTKLNRQADKLSAELQKLNQEIQQQKSSIDKASNALIL) adopt a coiled-coil conformation. Residues 116–136 (LVLTTLPIWIARVFYRKTHLF) form a helical membrane-spanning segment. Residues 137-160 (YIRQGIFPKYVEWVLALPFLPNGA) lie on the Lumenal side of the membrane. The helical transmembrane segment at 161–177 (VGLTIWMFAVNSVVSNF) threads the bilayer. Topologically, residues 178–199 (SFLVSFPFAKRVSKPVRDTKVE) are cytoplasmic.

The protein belongs to the WRB/GET1 family. As to quaternary structure, component of the Golgi to ER traffic (GET) complex, which is composed of GET1, GET2 and GET3. Within the complex, GET1 and GET2 form a heterotetramer which is stabilized by phosphatidylinositol binding and which binds to the GET3 homodimer.

It localises to the endoplasmic reticulum membrane. It is found in the golgi apparatus membrane. In terms of biological role, required for the post-translational delivery of tail-anchored (TA) proteins to the endoplasmic reticulum. Together with GET2, acts as a membrane receptor for soluble GET3, which recognizes and selectively binds the transmembrane domain of TA proteins in the cytosol. The GET complex cooperates with the HDEL receptor ERD2 to mediate the ATP-dependent retrieval of resident ER proteins that contain a C-terminal H-D-E-L retention signal from the Golgi to the ER. This is Golgi to ER traffic protein 1 from Candida albicans (strain SC5314 / ATCC MYA-2876) (Yeast).